The sequence spans 720 residues: Protein O-mannosyl-transferase 1 (720 aa).

The next 8 membrane-spanning stretches (helical) occupy residues 7-27 (PVSVTVEINVLLLAVTALALF), 67-87 (FGHMILALGAYLGGFDGNFVW), 105-125 (LIPALAGSFCVPLAYLVVVEL), 127-147 (YSHFSALGACALLLMENSLIV), 150-170 (RFMLLESVLIFFLLLAVLSYL), 178-198 (SFFKWFWLVICGVSCAFGIGV), 201-221 (MGMFTYFLLLSLAAVHTWQLI), and 239-259 (FLALVVLPVIMYLGFFYIHLT). MIR domains follow at residues 291-354 (PLDV…IKDP), 365-422 (PKPV…VDIV), and 426-486 (SEKE…VEEH). The next 4 membrane-spanning stretches (helical) occupy residues 570 to 590 (IVTWTTGNITLVVYCLLFLTY), 609 to 629 (LVLAGVVCLGGWAVNYLPFFL), 633 to 653 (TLFLYHYLPALTFKILQIPIV), and 670 to 690 (AFGGVILAVLCSVYMSYHSLS).

This sequence belongs to the glycosyltransferase 39 family. Widely expressed. Has particularly strong expression in testis, ovary, brain, liver and heart.

Its subcellular location is the endoplasmic reticulum membrane. It catalyses the reaction a di-trans,poly-cis-dolichyl beta-D-mannosyl phosphate + L-seryl-[protein] = 3-O-(alpha-D-mannosyl)-L-seryl-[protein] + a di-trans,poly-cis-dolichyl phosphate + H(+). The catalysed reaction is a di-trans,poly-cis-dolichyl beta-D-mannosyl phosphate + L-threonyl-[protein] = 3-O-(alpha-D-mannosyl)-L-threonyl-[protein] + a di-trans,poly-cis-dolichyl phosphate + H(+). It participates in protein modification; protein glycosylation. Functionally, transfers mannosyl residues to the hydroxyl group of serine or threonine residues. Coexpression of both POMT1 and POMT2 is necessary for enzyme activity, expression of either POMT1 or POMT2 alone is insufficient. This Danio rerio (Zebrafish) protein is Protein O-mannosyl-transferase 1.